The following is a 322-amino-acid chain: MAPKATKAEKKIVYDGKLCQLLDEYTQILVVNADNVGSKQLQNIRQGLRGDSVVLMGKNTMMKRSVRIHAEKTGNQAFLNLIPLLIGNVGLIFTKGYLKEVSEEVAKYKVGAPACVGLVAPIDVVVPPGNTGLDPSQTSFFQVLNIPTKINKGTVEIITPVELIKKGDKVGSSEAALLAKLGIRPFSYGLVVLSVYDNGSVFKPEVLDLTEDDLLEKFAIGVSQCYFSDTSHFIPNPSAAPHVFINAYKNVLAVAVATEYSFPQADEVKEYLKDPSKFAAVAAAAAPAADSGAAPAAAAKAEKEEEPAEESDDEMGFGLFDE.

Positions 294 to 322 (APAAAAKAEKEEEPAEESDDEMGFGLFDE) are disordered. Positions 304–322 (EEEPAEESDDEMGFGLFDE) are enriched in acidic residues.

Belongs to the universal ribosomal protein uL10 family. P0 forms a pentameric complex by interaction with dimers of P1 and P2. Phosphorylated.

Functionally, ribosomal protein P0 is the functional equivalent of E.coli protein L10. In Lupinus luteus (European yellow lupine), this protein is Large ribosomal subunit protein uL10.